Here is a 261-residue protein sequence, read N- to C-terminus: NAD-capped RNA hydrolase NudC (261 aa).

Arginine 69 is a binding site for substrate. Cysteine 98 and cysteine 101 together coordinate Zn(2+). Position 111 (glutamate 111) interacts with substrate. 2 residues coordinate Zn(2+): cysteine 116 and cysteine 119. A substrate-binding site is contributed by tyrosine 124. The region spanning 125-248 (PQIAPCIIVA…TVARRLIEDT (124 aa)) is the Nudix hydrolase domain. Alanine 158, glutamate 174, and glutamate 178 together coordinate a divalent metal cation. A Nudix box motif is present at residues 159-180 (GFVEVGETLEQTVAREVMEESS). 192 to 199 (QPWPFPQS) contacts substrate. Glutamate 219 contributes to the a divalent metal cation binding site. Alanine 241 is a binding site for substrate.

It belongs to the Nudix hydrolase family. NudC subfamily. As to quaternary structure, homodimer. Mg(2+) is required as a cofactor. Mn(2+) serves as cofactor. The cofactor is Zn(2+).

It catalyses the reaction a 5'-end NAD(+)-phospho-ribonucleoside in mRNA + H2O = a 5'-end phospho-adenosine-phospho-ribonucleoside in mRNA + beta-nicotinamide D-ribonucleotide + 2 H(+). The catalysed reaction is NAD(+) + H2O = beta-nicotinamide D-ribonucleotide + AMP + 2 H(+). The enzyme catalyses NADH + H2O = reduced beta-nicotinamide D-ribonucleotide + AMP + 2 H(+). MRNA decapping enzyme that specifically removes the nicotinamide adenine dinucleotide (NAD) cap from a subset of mRNAs by hydrolyzing the diphosphate linkage to produce nicotinamide mononucleotide (NMN) and 5' monophosphate mRNA. The NAD-cap is present at the 5'-end of some mRNAs and stabilizes RNA against 5'-processing. Has preference for mRNAs with a 5'-end purine. Catalyzes the hydrolysis of a broad range of dinucleotide pyrophosphates. The sequence is that of NAD-capped RNA hydrolase NudC from Erwinia tasmaniensis (strain DSM 17950 / CFBP 7177 / CIP 109463 / NCPPB 4357 / Et1/99).